Here is a 259-residue protein sequence, read N- to C-terminus: DNA terminal protein (259 aa).

Tyr190 is modified (O-(5'-phospho-DNA)-tyrosine). The Nuclear localization signal motif lies at 243–259 (KKKYKRRQKRGYGSKGV).

Belongs to the tectivirus DNA terminal protein family. In terms of assembly, heterodimer with viral polymerase. Binds to ssDNA.

The protein resides in the virion. The protein localises to the host nucleus. Acts as a primer for viral genomic replication. DNA terminal protein is covalently linked to the 5'-ends of both strands of the genome through a phosphodiester bond between the beta-hydroxyl group of a tyrosine residue and the 5'-phosphate of the terminal deoxyadenylate. This protein is essential for DNA replication and is involved in the priming of DNA elongation. The protein is DNA terminal protein (VIII) of Enterobacteria phage PRD1 (Bacteriophage PRD1).